Here is an 873-residue protein sequence, read N- to C-terminus: Zinc fingers and homeoboxes protein 1 (873 aa).

The tract at residues 24 to 63 (LISDLDEGPPVLTPVENTRAESISSDEEVHESVDSDNQQN) is disordered. Position 36 is a phosphothreonine (Thr36). Ser45, Ser47, and Ser48 each carry phosphoserine. 2 consecutive C2H2-type zinc fingers follow at residues 70 to 93 (YECK…DSEH) and 102 to 125 (YVCV…LKYH). Residue Lys159 forms a Glycyl lysine isopeptide (Lys-Gly) (interchain with G-Cter in SUMO2) linkage. Ser202 carries the post-translational modification Phosphoserine. The disordered stretch occupies residues 202-236 (SVEDVPEEKENEIKPDREEIVENPSSSASESNTST). Basic and acidic residues predominate over residues 212 to 221 (NEIKPDREEI). A compositionally biased stretch (low complexity) spans 223–236 (ENPSSSASESNTST). Positions 272-432 (NSNLIPKVLI…QNNIQKSQVP (161 aa)) are required for dimerization. Residues 272–564 (NSNLIPKVLI…AQPKQSWNPF (293 aa)) are required for interaction with NFYA. A DNA-binding region (homeobox 1) is located at residues 284–346 (NSIPTYNAAL…LKHGVSWTPE (63 aa)). Glycyl lysine isopeptide (Lys-Gly) (interchain with G-Cter in SUMO2) cross-links involve residues Lys441, Lys454, Lys485, and Lys629. 2 DNA-binding regions (homeobox) span residues 464-526 (SFGI…KSNQ) and 569-630 (PQKF…EEKM). Disordered stretches follow at residues 626–667 (KEEK…ICKK) and 732–770 (SSMN…NNWD). At Ser648 the chain carries Phosphoserine. The homeobox 4 DNA-binding region spans 660–722 (STGKICKKTP…YAWKNGNLKW (63 aa)). A required for nuclear localization region spans residues 734 to 768 (MNGLSSLRKRGRGRPKGRGRGRPRGRPRGSKRINN). The span at 740-764 (LRKRGRGRPKGRGRGRPRGRPRGSK) shows a compositional bias: basic residues. Ser774 carries the phosphoserine modification. Residues 777-832 (KFKTGTAILKDYYLKHKFLNEQDLDELVNKSHMGYEQVREWFAERQRRSELGIELF) constitute a DNA-binding region (homeobox 5). The disordered stretch occupies residues 829 to 873 (IELFEENEEEDEVIDDQEEDEEETDDSDTWEPPRHVKRKLSKSDD). Over residues 831-857 (LFEENEEEDEVIDDQEEDEEETDDSDT) the composition is skewed to acidic residues. A required for repressor activity region spans residues 831–873 (LFEENEEEDEVIDDQEEDEEETDDSDTWEPPRHVKRKLSKSDD). Over residues 863–873 (HVKRKLSKSDD) the composition is skewed to basic residues.

This sequence belongs to the ZHX family. As to quaternary structure, forms homodimers. Heterodimer (via HD1 domain) with ZHX2 (via HD1 domain). Also forms a heterodimer with ZHX3 which is a prerequisite for repressor activity. Interacts with ATF7IP and NFYA. Interacts (via homeobox domains) with DNMT3B (via PWWP domain). As to expression, ubiquitously expressed. Expressed in podocytes.

The protein resides in the nucleus. Functionally, acts as a transcriptional repressor. Increases DNMT3B-mediated repressive transcriptional activity when DNMT3B is tethered to DNA. May link molecule between DNMT3B and other co-repressor proteins. This is Zinc fingers and homeoboxes protein 1 (ZHX1) from Homo sapiens (Human).